Consider the following 1395-residue polypeptide: DNA-directed RNA polymerase subunit beta' (1395 aa).

Zn(2+) contacts are provided by cysteine 70, cysteine 72, cysteine 85, and cysteine 88. Residues aspartate 460, aspartate 462, and aspartate 464 each contribute to the Mg(2+) site. The Zn(2+) site is built by cysteine 814, cysteine 888, cysteine 895, and cysteine 898.

Belongs to the RNA polymerase beta' chain family. As to quaternary structure, the RNAP catalytic core consists of 2 alpha, 1 beta, 1 beta' and 1 omega subunit. When a sigma factor is associated with the core the holoenzyme is formed, which can initiate transcription. Mg(2+) is required as a cofactor. It depends on Zn(2+) as a cofactor.

It carries out the reaction RNA(n) + a ribonucleoside 5'-triphosphate = RNA(n+1) + diphosphate. In terms of biological role, DNA-dependent RNA polymerase catalyzes the transcription of DNA into RNA using the four ribonucleoside triphosphates as substrates. This Pseudoalteromonas atlantica (strain T6c / ATCC BAA-1087) protein is DNA-directed RNA polymerase subunit beta'.